The primary structure comprises 455 residues: Kynurenine--oxoglutarate transaminase 3 (455 aa).

G72 contacts substrate. K117 is modified (N6-acetyllysine; alternate). The residue at position 117 (K117) is an N6-succinyllysine; alternate. N219 lines the substrate pocket. K281 is modified (N6-(pyridoxal phosphate)lysine). Substrate is bound at residue R430.

Belongs to the class-I pyridoxal-phosphate-dependent aminotransferase family. Homodimer. It depends on pyridoxal 5'-phosphate as a cofactor. In terms of tissue distribution, widely expressed, with higher expression levels in liver, kidney, heart and neuroendocrine tissues.

It catalyses the reaction L-kynurenine + 2-oxoglutarate = kynurenate + L-glutamate + H2O. The enzyme catalyses L-kynurenine + glyoxylate = kynurenate + glycine + H2O. The catalysed reaction is 3-hydroxy-L-kynurenine + glyoxylate = xanthurenate + glycine + H2O. It carries out the reaction an S-substituted L-cysteine + H2O = a thiol + pyruvate + NH4(+). It participates in amino-acid degradation; L-kynurenine degradation; kynurenate from L-kynurenine: step 1/2. Its activity is regulated as follows. Kynurenine transamination is competitively inhibited by cysteine, glutamine, histidine, methionine, leucine, or phenylalanine. In terms of biological role, catalyzes the irreversible transamination of the L-tryptophan metabolite L-kynurenine to form kynurenic acid (KA), an intermediate in the tryptophan catabolic pathway which is also a broad spectrum antagonist of the three ionotropic excitatory amino acid receptors among others. May catalyze the beta-elimination of S-conjugates and Se-conjugates of L-(seleno)cysteine, resulting in the cleavage of the C-S or C-Se bond. Has transaminase activity towards L-kynurenine, tryptophan, phenylalanine, serine, cysteine, methionine, histidine, glutamine and asparagine with glyoxylate as an amino group acceptor (in vitro). Has lower activity with 2-oxoglutarate as amino group acceptor (in vitro). The polypeptide is Kynurenine--oxoglutarate transaminase 3 (Kyat3) (Mus musculus (Mouse)).